The following is a 408-amino-acid chain: Guanine nucleotide-binding protein alpha-14 subunit (408 aa).

Residues 38 to 45, 78 to 85, 201 to 205, 216 to 222, 241 to 245, 285 to 288, 325 to 328, and Ala380 contribute to the GTP site; these read HSEELEAK, GGPSSGKS, NRISK, VHSRKAT, DVGGQ, FPNF, and NKVD. Positions 70–408 constitute a G-alpha domain; it reads SHIKILILGG…KANSKATGLS (339 aa). Positions 73-86 are G1 motif; it reads KILILGGPSSGKST. Mg(2+) is bound at residue Ser85. A G2 motif region spans residues 214 to 222; sequence DIVHSRKAT. Thr222 provides a ligand contact to Mg(2+). Residues 237–246 form a G3 motif region; that stretch reads LLMVDVGGQR. The tract at residues 321–328 is G4 motif; that stretch reads LLFFNKVD. The segment at 378–383 is G5 motif; the sequence is TTATNT.

Belongs to the G-alpha family. G proteins are composed of 3 units; alpha, beta and gamma. The alpha chain contains the guanine nucleotide binding site.

Guanine nucleotide-binding proteins (G proteins) are involved as modulators or transducers in various transmembrane signaling systems. The sequence is that of Guanine nucleotide-binding protein alpha-14 subunit (gpa-14) from Caenorhabditis briggsae.